The sequence spans 600 residues: Elongation factor 4 (600 aa).

Residues 5–187 (SNIRNFSIIA…ALVERIPAPT (183 aa)) enclose the tr-type G domain. Residues 17 to 22 (DHGKST) and 134 to 137 (NKID) each bind GTP.

It belongs to the TRAFAC class translation factor GTPase superfamily. Classic translation factor GTPase family. LepA subfamily.

It is found in the cell inner membrane. The enzyme catalyses GTP + H2O = GDP + phosphate + H(+). Functionally, required for accurate and efficient protein synthesis under certain stress conditions. May act as a fidelity factor of the translation reaction, by catalyzing a one-codon backward translocation of tRNAs on improperly translocated ribosomes. Back-translocation proceeds from a post-translocation (POST) complex to a pre-translocation (PRE) complex, thus giving elongation factor G a second chance to translocate the tRNAs correctly. Binds to ribosomes in a GTP-dependent manner. The polypeptide is Elongation factor 4 (Psychrobacter sp. (strain PRwf-1)).